Here is a 325-residue protein sequence, read N- to C-terminus: Ribose-phosphate pyrophosphokinase 4 (325 aa).

D145 and H147 together coordinate Mg(2+). The binding of phosphoribosylpyrophosphate stretch occupies residues 228–243 (GRHVVIVDDLVQSGGT).

This sequence belongs to the ribose-phosphate pyrophosphokinase family. Mg(2+) serves as cofactor.

The catalysed reaction is D-ribose 5-phosphate + ATP = 5-phospho-alpha-D-ribose 1-diphosphate + AMP + H(+). The protein is Ribose-phosphate pyrophosphokinase 4 of Oryza sativa subsp. japonica (Rice).